A 514-amino-acid polypeptide reads, in one-letter code: Triacylglyceride transporter MAB_2807 (514 aa).

Helical transmembrane passes span 19–39, 58–78, 88–108, 118–138, 157–177, 178–198, 210–230, 239–259, 278–298, 316–336, and 344–364; these read IAIG…YVVV, QVTP…PLLG, LILQ…ALST, VIQG…GADL, LGSV…GSWT, AIFW…QFSV, VDVV…VGLY, LPEW…AFIL, PFFA…VTLV, VFLL…GGWL, and IIAV…SGWP. Residues 371–380 are beta-hairpin; sequence VHNFGFFTLP. Transmembrane regions (helical) follow at residues 385 to 405, 420 to 440, and 485 to 505; these read DLVV…SAAL, VVVA…GWGI, and MFAI…FVGS.

It belongs to the major facilitator superfamily. P55 (TC 2.A.1.3.34) family.

The protein localises to the cell inner membrane. In terms of biological role, in association with lipoprotein LprG probably transports triacyglycerides (TAG) across the inner cell membrane into the periplasm; TAG probably regulates lipid metabolism and growth regulation and plays a structural role in the outer membrane. TAG (and maybe other lipids) enters the central cavity of the P55 transporter from within the cell inner membrane via clefts on the cytoplasmic face of P55 between TM5-TM8 and TM2-TM11. From there the lipid is probably transferred to the hydrophobic cavity of LprG. Involved in drug susceptibilty, its expression partially complements the antibiotic susceptibilty of a double lprG-mfs deletion. Probably does not function as a bona fide drug efflux pump, but instead plays a role in outer membrane biogenesis. Probably required with LprG for normal surface localization of lipoarabinomannan (LAM). The sequence is that of Triacylglyceride transporter MAB_2807 from Mycobacteroides abscessus (strain ATCC 19977 / DSM 44196 / CCUG 20993 / CIP 104536 / JCM 13569 / NCTC 13031 / TMC 1543 / L948) (Mycobacterium abscessus).